Here is a 65-residue protein sequence, read N- to C-terminus: Hirudin-3A' (65 aa).

The tract at residues 1-3 (VVY) is interaction with thrombin active site. 3 disulfide bridges follow: cysteine 6-cysteine 14, cysteine 16-cysteine 28, and cysteine 22-cysteine 39. The segment at 32-65 (SDGEKNECVTGEGTPKPQSHNDGDFEEIPEEYLQ) is disordered. Residue threonine 45 is glycosylated (O-linked (GalNAc...) threonine). The tract at residues 55–65 (DFEEIPEEYLQ) is interaction with fibrinogen-binding exosite of thrombin. Residues 55-65 (DFEEIPEEYLQ) are compositionally biased toward acidic residues. Tyrosine 63 carries the post-translational modification Sulfotyrosine.

The protein belongs to the protease inhibitor I14 (hirudin) family.

It localises to the secreted. Its function is as follows. Hirudin is a potent thrombin-specific protease inhibitor. It forms a stable non-covalent complex with alpha-thrombin, thereby abolishing its ability to cleave fibrinogen. This Hirudo medicinalis (Medicinal leech) protein is Hirudin-3A'.